The following is a 348-amino-acid chain: Ion-translocating oxidoreductase complex subunit D (348 aa).

Over 1–22 (MAFFIASSPHLRSKRSTADVMR) the chain is Cytoplasmic. Helical transmembrane passes span 23 to 43 (WVLV…GYGT) and 44 to 64 (LIQL…IMLL). The Cytoplasmic portion of the chain corresponds to 65 to 71 (RKRSPIS). The helical transmembrane segment at 72–91 (ALRDYSAVVTAWLLAVAIPP) threads the bilayer. Residues 92–94 (LSP) lie on the Periplasmic side of the membrane. Residues 95–117 (WWVVVIGLIFAIVIAKHLYGGLG) form a helical membrane-spanning segment. Residues 118–125 (QNPFNPAM) are Cytoplasmic-facing. The helical transmembrane segment at 126-146 (IAYVVLLISFPVQMTSWMAPI) threads the bilayer. At 147–213 (KLTAEPSSLV…ETLTQPQFSG (67 aa)) the chain is on the periplasmic side. At threonine 187 the chain carries FMN phosphoryl threonine. The chain crosses the membrane as a helical span at residues 214–234 (FAGIGWEWVNIAYLLGGLILL). The Cytoplasmic portion of the chain corresponds to 235–242 (KLRIIRWH). A helical membrane pass occupies residues 243 to 263 (IPVAMLAGLVFTALLAQLFAP). Residues 264 to 265 (GT) are Periplasmic-facing. Residues 266–286 (TASPMIHLLSGATMLGAFFIA) traverse the membrane as a helical segment. At 287–299 (TDPVSASTTDKGR) the chain is on the cytoplasmic side. 2 helical membrane-spanning segments follow: residues 300–320 (LIYG…GGFP) and 321–341 (DGVA…DYYT). Residues 342–348 (KPRTYGH) lie on the Cytoplasmic side of the membrane.

Belongs to the NqrB/RnfD family. The complex is composed of six subunits: RnfA, RnfB, RnfC, RnfD, RnfE and RnfG. FMN is required as a cofactor.

The protein resides in the cell inner membrane. Part of a membrane-bound complex that couples electron transfer with translocation of ions across the membrane. This Vibrio cholerae serotype O1 (strain ATCC 39541 / Classical Ogawa 395 / O395) protein is Ion-translocating oxidoreductase complex subunit D.